The sequence spans 111 residues: MTLADLKKPTSRASPSTEETVTRVRTPRRENNEILATVESLLGANRLRLRCMDGVVRMGRIPGSMKKKAWIREGDVVIAVPWEFQNEKADVIWKYTRPQVDWLERKGYLKG.

A disordered region spans residues 1–28; the sequence is MTLADLKKPTSRASPSTEETVTRVRTPR. The S1-like domain maps to 22–96; it reads TRVRTPRREN…EKADVIWKYT (75 aa).

It belongs to the eIF-1A family.

Its function is as follows. Seems to be required for maximal rate of protein biosynthesis. Enhances ribosome dissociation into subunits and stabilizes the binding of the initiator Met-tRNA(I) to 40 S ribosomal subunits. The sequence is that of Translation initiation factor 1A 1 (eIF1A1) from Methanosarcina mazei (strain ATCC BAA-159 / DSM 3647 / Goe1 / Go1 / JCM 11833 / OCM 88) (Methanosarcina frisia).